We begin with the raw amino-acid sequence, 348 residues long: MAAPRLPQLPPHDGPMLSVVDMHTGGEPLRIVLSGAPAPEGRTILEKRRWVRENADWLRKVLMFEPRGHRDMYGALLVPGDEEEANIGVLFMHNEGYSTMCGHAIVALGRFAVDYGLVNAAQGPETAVNIQCPCGLIRAYVSYTGGRSGSVRFRSVPAFAFATDVTVDVPGYGKVVVDIAYGGAFYAFVSAETFGLDVCSSRTRDLVDVSAAVTESVKAQVKLNHPDSDDLAFLYGTILTDGKDSYSEEPTANICIFAESQVDRSPTGSGVTARIALQYHKGLIQLEQIRTFKSGATGSLFTGKAVKETLCGNFKAVVVEVSGQAYYTGASSFVIENKDSLKDGFLLK.

The active-site Proton acceptor is the cysteine 101. Residues 102-103, aspartate 263, and 268-269 each bind substrate; these read GH and GS.

The protein belongs to the proline racemase family. In terms of assembly, homodimer.

It carries out the reaction trans-3-hydroxy-L-proline = 1-pyrroline-2-carboxylate + H2O. Catalyzes the dehydration of trans-3-hydroxy-L-proline to delta-1-pyrroline-2-carboxylate (Pyr2C). This is Trans-L-3-hydroxyproline dehydratase (l3hypdh) from Xenopus tropicalis (Western clawed frog).